Reading from the N-terminus, the 296-residue chain is Protoheme IX farnesyltransferase (296 aa).

9 consecutive transmembrane segments (helical) span residues 13 to 33 (IIFG…KGII), 35 to 55 (YPLF…GCVF), 84 to 104 (VTLI…YIAA), 107 to 127 (LAMW…SLYM), 132 to 152 (VYGT…GYCA), 162 to 182 (LILL…IAIF), 208 to 228 (ITLY…VGYA), 229 to 249 (GYKY…MALR), and 264 to 284 (FVFS…DFSV).

This sequence belongs to the UbiA prenyltransferase family. Protoheme IX farnesyltransferase subfamily.

The protein resides in the cell inner membrane. The catalysed reaction is heme b + (2E,6E)-farnesyl diphosphate + H2O = Fe(II)-heme o + diphosphate. The protein operates within porphyrin-containing compound metabolism; heme O biosynthesis; heme O from protoheme: step 1/1. Functionally, converts heme B (protoheme IX) to heme O by substitution of the vinyl group on carbon 2 of heme B porphyrin ring with a hydroxyethyl farnesyl side group. This chain is Protoheme IX farnesyltransferase, found in Edwardsiella ictaluri (strain 93-146).